Consider the following 312-residue polypeptide: Acetaldehyde dehydrogenase (312 aa).

Residue 11–14 (SGNI) coordinates NAD(+). C129 functions as the Acyl-thioester intermediate in the catalytic mechanism. NAD(+) contacts are provided by residues 160–168 (SAGPGTRAN) and N287.

Belongs to the acetaldehyde dehydrogenase family.

It carries out the reaction acetaldehyde + NAD(+) + CoA = acetyl-CoA + NADH + H(+). This chain is Acetaldehyde dehydrogenase (xylQ), found in Sphingobium yanoikuyae (Sphingomonas yanoikuyae).